A 58-amino-acid chain; its full sequence is Bowman-Birk type wound-induced trypsin inhibitor (58 aa).

Cystine bridges form between cysteine 4-cysteine 57, cysteine 5-cysteine 20, cysteine 8-cysteine 53, cysteine 10-cysteine 18, cysteine 27-cysteine 34, cysteine 31-cysteine 46, and cysteine 36-cysteine 44.

This sequence belongs to the Bowman-Birk serine protease inhibitor family.

This is Bowman-Birk type wound-induced trypsin inhibitor from Medicago sativa (Alfalfa).